The primary structure comprises 29 residues: Cytochrome b6-f complex subunit 8 (29 aa).

A helical transmembrane segment spans residues 3–23 (IVSIAWAALMVVFSFSLSLVV).

The protein belongs to the PetN family. The 4 large subunits of the cytochrome b6-f complex are cytochrome b6, subunit IV (17 kDa polypeptide, PetD), cytochrome f and the Rieske protein, while the 4 small subunits are PetG, PetL, PetM and PetN. The complex functions as a dimer.

Its subcellular location is the plastid. It localises to the chloroplast thylakoid membrane. Functionally, component of the cytochrome b6-f complex, which mediates electron transfer between photosystem II (PSII) and photosystem I (PSI), cyclic electron flow around PSI, and state transitions. The sequence is that of Cytochrome b6-f complex subunit 8 from Phaseolus vulgaris (Kidney bean).